Consider the following 282-residue polypeptide: Acyl-CoA-binding domain-containing protein 6 (282 aa).

The disordered stretch occupies residues 1-39 (MATPFLPSGATTGDSGGELSSGDDSGDMESFQTPEAEGT). S41 is subject to Phosphoserine. Positions 42–127 (LAELFEKAAA…VKKLDPGWNP (86 aa)) constitute an ACB domain. An acyl-CoA is bound by residues 69–73 (YARFK) and K95. S106 carries the phosphoserine modification. Y114 contacts an acyl-CoA. ANK repeat units lie at residues 191–220 (EGRA…GINC) and 224–253 (EGQT…DPTL).

Monomer.

The protein resides in the cytoplasm. It localises to the nucleus. Binds long-chain acyl-coenzyme A molecules with a strong preference for unsaturated C18:1-CoA, lower affinity for unsaturated C20:4-CoA, and very weak affinity for saturated C16:0-CoA. Does not bind fatty acids. Plays a role in protein N-myristoylation. This Mus musculus (Mouse) protein is Acyl-CoA-binding domain-containing protein 6 (Acbd6).